The sequence spans 282 residues: Anamorsin homolog (282 aa).

The interval Met-1–Ala-140 is N-terminal SAM-like domain. The tract at residues Pro-141–Ala-192 is linker. 4 residues coordinate [2Fe-2S] cluster: Cys-203, Cys-214, Cys-217, and Cys-219. The fe-S binding site A stretch occupies residues Cys-203 to Cys-219. Residues Cys-243, Cys-246, Cys-254, and Cys-257 each coordinate [4Fe-4S] cluster. 2 consecutive short sequence motifs (cx2C motif) follow at residues Cys-243–Cys-246 and Cys-254–Cys-257. Positions Cys-243–Cys-257 are fe-S binding site B.

It belongs to the anamorsin family. In terms of assembly, monomer. The cofactor is [2Fe-2S] cluster. [4Fe-4S] cluster is required as a cofactor.

It is found in the cytoplasm. Its subcellular location is the mitochondrion intermembrane space. Its function is as follows. Component of the cytosolic iron-sulfur (Fe-S) protein assembly (CIA) machinery. Required for the maturation of extramitochondrial Fe-S proteins. Part of an electron transfer chain functioning in an early step of cytosolic Fe-S biogenesis, facilitating the de novo assembly of a [4Fe-4S] cluster on the cytosolic Fe-S scaffold complex. Electrons are transferred from NADPH via a FAD- and FMN-containing diflavin oxidoreductase. Together with the diflavin oxidoreductase, also required for the assembly of the diferric tyrosyl radical cofactor of ribonucleotide reductase (RNR), probably by providing electrons for reduction during radical cofactor maturation in the catalytic small subunit. The sequence is that of Anamorsin homolog from Monosiga brevicollis (Choanoflagellate).